The sequence spans 157 residues: Phosphopantetheine adenylyltransferase (157 aa).

Ser-8 is a binding site for substrate. ATP is bound by residues 8–9 (SF) and His-16. Lys-40, Thr-72, and Arg-86 together coordinate substrate. ATP is bound by residues 87-89 (GLR), Glu-97, and 122-128 (FSFLSSS).

This sequence belongs to the bacterial CoaD family. Homohexamer. Mg(2+) serves as cofactor.

The protein localises to the cytoplasm. The catalysed reaction is (R)-4'-phosphopantetheine + ATP + H(+) = 3'-dephospho-CoA + diphosphate. It participates in cofactor biosynthesis; coenzyme A biosynthesis; CoA from (R)-pantothenate: step 4/5. Its function is as follows. Reversibly transfers an adenylyl group from ATP to 4'-phosphopantetheine, yielding dephospho-CoA (dPCoA) and pyrophosphate. The polypeptide is Phosphopantetheine adenylyltransferase (Prochlorococcus marinus (strain MIT 9211)).